Consider the following 209-residue polypeptide: Uracil phosphoribosyltransferase (209 aa).

5-phospho-alpha-D-ribose 1-diphosphate-binding positions include arginine 79, arginine 104, and 131–139; that span reads DPMLATGGS. Uracil contacts are provided by residues isoleucine 194 and 199 to 201; that span reads GDA. Aspartate 200 serves as a coordination point for 5-phospho-alpha-D-ribose 1-diphosphate.

This sequence belongs to the UPRTase family. Mg(2+) is required as a cofactor.

It carries out the reaction UMP + diphosphate = 5-phospho-alpha-D-ribose 1-diphosphate + uracil. It participates in pyrimidine metabolism; UMP biosynthesis via salvage pathway; UMP from uracil: step 1/1. Its activity is regulated as follows. Allosterically activated by GTP. Catalyzes the conversion of uracil and 5-phospho-alpha-D-ribose 1-diphosphate (PRPP) to UMP and diphosphate. The chain is Uracil phosphoribosyltransferase from Exiguobacterium sibiricum (strain DSM 17290 / CCUG 55495 / CIP 109462 / JCM 13490 / 255-15).